Consider the following 106-residue polypeptide: Nucleoid-associated protein RPB_0667 (106 aa).

Belongs to the YbaB/EbfC family. In terms of assembly, homodimer.

Its subcellular location is the cytoplasm. It is found in the nucleoid. In terms of biological role, binds to DNA and alters its conformation. May be involved in regulation of gene expression, nucleoid organization and DNA protection. The chain is Nucleoid-associated protein RPB_0667 from Rhodopseudomonas palustris (strain HaA2).